The chain runs to 1176 residues: Myosin light chain kinase, smooth muscle (1176 aa).

The segment at 1-41 is actin-binding (calcium/calmodulin-sensitive); that stretch reads MDFRANLQRQVKPKTLSEEERKVHGPQQVDFRSVLAKKGTP. The tract at residues 1–354 is disordered; it reads MDFRANLQRQ…SEKRPESRGT (354 aa). The interval 26 to 41 is calmodulin-binding; it reads PQQVDFRSVLAKKGTP. Over residues 43 to 55 the composition is skewed to pro residues; that stretch reads TPVPEKVPPPKPA. Repeat copies occupy residues 100 to 111, 112 to 123, 124 to 135, 136 to 147, 148 to 159, 160 to 171, 172 to 183, 184 to 195, 196 to 207, 208 to 219, 220 to 231, 232 to 243, 244 to 255, 256 to 267, 268 to 279, and 280 to 291. The segment at 100-291 is 16 X 12 AA tandem repeats; that stretch reads FLKPVGNAKL…KLVGNAKPAE (192 aa). Serine 202 carries the phosphoserine modification. Residues 319 to 721 are actin-binding (calcium/calmodulin-insensitive); that stretch reads PTGKEELKKE…TVTVNTEQKV (403 aa). Residues 320–335 show a composition bias toward basic and acidic residues; sequence TGKEELKKEIKNDVNC. In terms of domain architecture, Ig-like C2-type 1 spans 356–444; that stretch reads PTFEEKLQDL…GQAESSCQVT (89 aa). A disulfide bridge connects residues cysteine 377 and cysteine 428. Positions 448–497 are disordered; the sequence is PDAPTSENAKAPEMKARRPKSSLPPVLGTESDATVKKKPAPKTPPKAAMP. Residues 498-586 enclose the Ig-like C2-type 2 domain; the sequence is PQIIQFPEDQ…GSRQAQVNLT (89 aa). Residues 594 to 686 form the Fibronectin type-III domain; it reads PAGTPCASDI…QESELTALGE (93 aa). The interval 673 to 707 is disordered; that stretch reads SEPSQESELTALGEKPEEEPKDEVEVSDDDEKEPE. A compositionally biased stretch (acidic residues) spans 688 to 706; it reads PEEEPKDEVEVSDDDEKEP. Serine 699 is subject to Phosphoserine. At tyrosine 710 the chain carries Phosphotyrosine; by ABL1. The Protein kinase domain occupies 725–980; the sequence is YDIEERLGSG…CTQCLQHPWL (256 aa). ATP is bound by residues 731 to 739 and lysine 754; that span reads LGSGKFGQV. Phosphotyrosine; by ABL1 is present on tyrosine 836. Aspartate 846 acts as the Proton acceptor in catalysis. Tyrosine 896 carries the post-translational modification Phosphotyrosine; by ABL1. A calmodulin-binding region spans residues 972-1035; sequence TQCLQHPWLM…SGLSGRKSST (64 aa). A phosphoserine mark is found at serine 1020, serine 1021, serine 1033, serine 1034, and serine 1037. Position 1039 is a phosphothreonine (threonine 1039). A Phosphoserine modification is found at serine 1040. The 90-residue stretch at 1069-1158 folds into the Ig-like C2-type 3 domain; the sequence is PYFSKTIRDL…GEATCTAELI (90 aa). Residues cysteine 1090 and cysteine 1142 are joined by a disulfide bond.

Belongs to the protein kinase superfamily. CAMK Ser/Thr protein kinase family. In terms of assembly, all isoforms including Telokin bind calmodulin. Interacts with SVIL. Interacts with CTTN; this interaction is reduced during thrombin-induced endothelial cell (EC) contraction but is promoted by the barrier-protective agonist sphingosine 1-phosphate (S1P) within lamellipodia. A complex made of ABL1, CTTN and MYLK regulates cortical actin-based cytoskeletal rearrangement critical to sphingosine 1-phosphate (S1P)-mediated endothelial cell (EC) barrier enhancement. Binds to NAA10/ARD1 and PTK2B/PYK2. It depends on Mg(2+) as a cofactor. Ca(2+) serves as cofactor. Post-translationally, the C-terminus is deglutamylated by AGTPBP1/CCP1, AGBL1/CCP4 and AGBL4/CCP6, leading to the formation of Myosin light chain kinase, smooth muscle, deglutamylated form. The consequences of C-terminal deglutamylation are unknown. In terms of processing, can probably be down-regulated by phosphorylation. Tyrosine phosphorylation by ABL1 increases kinase activity, reverses MLCK-mediated inhibition of Arp2/3-mediated actin polymerization, and enhances CTTN-binding. Phosphorylation by SRC promotes CTTN binding.

The protein localises to the cytoplasm. Its subcellular location is the cell projection. It localises to the lamellipodium. It is found in the cleavage furrow. The protein resides in the cytoskeleton. The protein localises to the stress fiber. The enzyme catalyses L-seryl-[myosin light chain] + ATP = O-phospho-L-seryl-[myosin light chain] + ADP + H(+). It carries out the reaction L-threonyl-[myosin light chain] + ATP = O-phospho-L-threonyl-[myosin light chain] + ADP + H(+). Functionally, calcium/calmodulin-dependent myosin light chain kinase implicated in smooth muscle contraction via phosphorylation of myosin light chains (MLC). Also regulates actin-myosin interaction through a non-kinase activity. Phosphorylates PTK2B/PYK2 and myosin light-chains. Involved in the inflammatory response (e.g. apoptosis, vascular permeability, leukocyte diapedesis), cell motility and morphology, airway hyperreactivity and other activities relevant to asthma. Required for tonic airway smooth muscle contraction that is necessary for physiological and asthmatic airway resistance. Necessary for gastrointestinal motility. Implicated in the regulation of endothelial as well as vascular permeability, probably via the regulation of cytoskeletal rearrangements. In the nervous system it has been shown to control the growth initiation of astrocytic processes in culture and to participate in transmitter release at synapses formed between cultured sympathetic ganglion cells. Critical participant in signaling sequences that result in fibroblast apoptosis. Plays a role in the regulation of epithelial cell survival. Required for epithelial wound healing, especially during actomyosin ring contraction during purse-string wound closure. Mediates RhoA-dependent membrane blebbing. Triggers TRPC5 channel activity in a calcium-dependent signaling, by inducing its subcellular localization at the plasma membrane. Promotes cell migration (including tumor cells) and tumor metastasis. PTK2B/PYK2 activation by phosphorylation mediates ITGB2 activation and is thus essential to trigger neutrophil transmigration during acute lung injury (ALI). May regulate optic nerve head astrocyte migration. Probably involved in mitotic cytoskeletal regulation. Regulates tight junction probably by modulating ZO-1 exchange in the perijunctional actomyosin ring. Mediates burn-induced microvascular barrier injury; triggers endothelial contraction in the development of microvascular hyperpermeability by phosphorylating MLC. Essential for intestinal barrier dysfunction. Mediates Giardia spp.-mediated reduced epithelial barrier function during giardiasis intestinal infection via reorganization of cytoskeletal F-actin and tight junctional ZO-1. Necessary for hypotonicity-induced Ca(2+) entry and subsequent activation of volume-sensitive organic osmolyte/anion channels (VSOAC) in cervical cancer cells. The sequence is that of Myosin light chain kinase, smooth muscle (MYLK) from Bos taurus (Bovine).